Reading from the N-terminus, the 277-residue chain is Phosphoenolpyruvate synthase regulatory protein (277 aa).

157 to 164 (GVSRCGKT) provides a ligand contact to ADP.

It belongs to the pyruvate, phosphate/water dikinase regulatory protein family. PSRP subfamily.

The enzyme catalyses [pyruvate, water dikinase] + ADP = [pyruvate, water dikinase]-phosphate + AMP + H(+). The catalysed reaction is [pyruvate, water dikinase]-phosphate + phosphate + H(+) = [pyruvate, water dikinase] + diphosphate. Its function is as follows. Bifunctional serine/threonine kinase and phosphorylase involved in the regulation of the phosphoenolpyruvate synthase (PEPS) by catalyzing its phosphorylation/dephosphorylation. This Salmonella gallinarum (strain 287/91 / NCTC 13346) protein is Phosphoenolpyruvate synthase regulatory protein.